The following is a 175-amino-acid chain: T-cell surface glycoprotein CD3 epsilon chain (175 aa).

An N-terminal signal peptide occupies residues methionine 1 to alanine 21. Residues glutamine 22 to threonine 100 lie on the Extracellular side of the membrane. The chain crosses the membrane as a helical span at residues phenylalanine 101–valine 121. Topologically, residues tyrosine 122 to phenylalanine 175 are cytoplasmic. Positions arginine 133–glutamine 163 are disordered. Residues arginine 146–arginine 173 enclose the ITAM domain.

In terms of assembly, the TCR/CD3 complex of T-lymphocytes consists of either a TCR alpha/beta or TCR gamma/delta heterodimer coexpressed at the cell surface with the invariant subunits of CD3 labeled gamma, delta, epsilon, zeta, and eta.

Its subcellular location is the cell membrane. Its function is as follows. The CD3 complex mediates signal transduction, resulting in T-cell activation and proliferation. Required for normal immune responses. The chain is T-cell surface glycoprotein CD3 epsilon chain (CD3E) from Gallus gallus (Chicken).